The following is a 235-amino-acid chain: 1-(5-phosphoribosyl)-5-[(5-phosphoribosylamino)methylideneamino] imidazole-4-carboxamide isomerase (235 aa).

Asp-8 functions as the Proton acceptor in the catalytic mechanism. The Proton donor role is filled by Asp-129.

This sequence belongs to the HisA/HisF family.

Its subcellular location is the cytoplasm. The enzyme catalyses 1-(5-phospho-beta-D-ribosyl)-5-[(5-phospho-beta-D-ribosylamino)methylideneamino]imidazole-4-carboxamide = 5-[(5-phospho-1-deoxy-D-ribulos-1-ylimino)methylamino]-1-(5-phospho-beta-D-ribosyl)imidazole-4-carboxamide. The protein operates within amino-acid biosynthesis; L-histidine biosynthesis; L-histidine from 5-phospho-alpha-D-ribose 1-diphosphate: step 4/9. The sequence is that of 1-(5-phosphoribosyl)-5-[(5-phosphoribosylamino)methylideneamino] imidazole-4-carboxamide isomerase from Thermoanaerobacter sp. (strain X514).